The sequence spans 1322 residues: Sal-like protein 1 (1322 aa).

The segment at 1 to 41 (MSRRKQAKPQHFQSDPEVASLPRRDGDTEKGQPSRPTKSKD) is disordered. The span at 22–41 (PRRDGDTEKGQPSRPTKSKD) shows a compositional bias: basic and acidic residues. Residues 43–65 (HVCGRCCAEFFELSDLLLHKKSC) form a C2H2-type 1; atypical zinc finger. The interval 78-128 (PASPAKTFPPGPSLNDPDDQMKDAANKADQEDCSDLSEPKGLDREESMEVE) is disordered. 2 stretches are compositionally biased toward basic and acidic residues: residues 96–107 (DQMKDAANKADQ) and 114–124 (SEPKGLDREES). A Glycyl lysine isopeptide (Lys-Gly) (interchain with G-Cter in SUMO2) cross-link involves residue Lys-440. 2 consecutive C2H2-type zinc fingers follow at residues 450–472 (HKCR…LRSH) and 478–500 (FKCN…FQRH). Positions 578–659 (PIPISHSAAS…GGPGGTTFTN (82 aa)) are disordered. Polar residues predominate over residues 584–594 (SAASPQGSVKS). 3 positions are modified to phosphoserine: Ser-591, Ser-594, and Ser-596. The span at 629-645 (NMASSAVPTAGNSTLNS) shows a compositional bias: polar residues. Glycyl lysine isopeptide (Lys-Gly) (interchain with G-Cter in SUMO2) cross-links involve residues Lys-672, Lys-689, and Lys-700. 3 consecutive C2H2-type zinc fingers follow at residues 705–727 (NECI…YRTH), 733–755 (FKCK…YSVH), and 765–787 (HSCP…IRMH). Disordered stretches follow at residues 789–855 (GGQI…SSPL) and 891–961 (SMEG…GLSP). Positions 819 to 832 (DLDNFSDENMEECP) are enriched in acidic residues. The span at 842–855 (SADASQDSLSSSPL) shows a compositional bias: low complexity. Positions 898–935 (TNDSSSVGGDMESQSAGSPAISESTSSMQALSPSNSTQ) are enriched in polar residues. The span at 936–948 (EFHKSPGMEEKPQ) shows a compositional bias: basic and acidic residues. Ser-940 is subject to Phosphoserine. Residues Lys-946 and Lys-981 each participate in a glycyl lysine isopeptide (Lys-Gly) (interchain with G-Cter in SUMO2) cross-link. 2 consecutive C2H2-type zinc fingers follow at residues 1000-1022 (TACD…YRSH) and 1028-1050 (FICT…MLTH). Lys-1085 is covalently cross-linked (Glycyl lysine isopeptide (Lys-Gly) (interchain with G-Cter in SUMO2)). A disordered region spans residues 1094–1119 (VSPQDSKDAPTSHVPQGPLSSSATSP). 2 C2H2-type zinc fingers span residues 1133 to 1155 (HYCN…ERTH) and 1161 to 1183 (FACT…MGTH). Glycyl lysine isopeptide (Lys-Gly) (interchain with G-Cter in SUMO2) cross-links involve residues Lys-1218, Lys-1297, and Lys-1317.

The protein belongs to the sal C2H2-type zinc-finger protein family. As to quaternary structure, may associate with NuRD histone deacetylase complex (HDAC). Interacts with components of HDAC complex including HDAC1, HDAC2, RBBP4, RBPP7, MTA1 and MTA2. Interacts with CCNQ. Interacts with NSD2 (via PHD-type zinc fingers 1, 2 and 3). As to expression, expressed in the metanephric mesenchyme surrounding ureteric bud.

The protein resides in the nucleus. Functionally, transcriptional repressor involved in organogenesis. Plays an essential role in ureteric bud invasion during kidney development. The sequence is that of Sal-like protein 1 (Sall1) from Mus musculus (Mouse).